A 315-amino-acid polypeptide reads, in one-letter code: Probable HTH-type transcriptional regulator SinR (315 aa).

In terms of domain architecture, HTH lysR-type spans 8-65 (RGMRDWMIFIKVAEVGNLSRAARELDISISAVSKSLSRLENSIEVTLLRRDSHHLELT). Positions 25–44 (LSRAARELDISISAVSKSLS) form a DNA-binding region, H-T-H motif.

This sequence belongs to the LysR transcriptional regulatory family.

In terms of biological role, probable regulatory protein. Its target is not known. This is Probable HTH-type transcriptional regulator SinR (sinR) from Salmonella typhimurium (strain LT2 / SGSC1412 / ATCC 700720).